The sequence spans 406 residues: Enoyl-[acyl-carrier-protein] reductase [NADH] (406 aa).

Residues 48–53, 74–75, 111–112, and 140–141 contribute to the NAD(+) site; these read GASTGF, FE, DA, and IA. Position 226 (Y226) interacts with substrate. Residue Y236 is the Proton donor of the active site. NAD(+)-binding positions include K245 and 275–277; that span reads LVT.

It belongs to the TER reductase family. In terms of assembly, monomer.

It catalyses the reaction a 2,3-saturated acyl-[ACP] + NAD(+) = a (2E)-enoyl-[ACP] + NADH + H(+). It functions in the pathway lipid metabolism; fatty acid biosynthesis. Involved in the final reduction of the elongation cycle of fatty acid synthesis (FAS II). Catalyzes the reduction of a carbon-carbon double bond in an enoyl moiety that is covalently linked to an acyl carrier protein (ACP). This Coxiella burnetii (strain CbuK_Q154) (Coxiella burnetii (strain Q154)) protein is Enoyl-[acyl-carrier-protein] reductase [NADH].